The primary structure comprises 456 residues: MYRKKYSIHFVGIGGIGMSGIAELLLNLGYQVSGSDIKESDITQRLAKLGGTIYRGHRAENVKGCDVVVVSSAIRQENPETASAREQGIPVIPRAEMLAELMRLKYSVAIAGAHGKTTTTSIVADVLAAGGLDPTVVIGGKLLSIGSNAKLGHGEFIVAEADESDGSFLKMSPSIAVVTNIDREHMDHYKDMDEIKDAFAQFVDKIPFYGLSVLCLDSEPVQDLIPFINKRYVTYGLTTQADLQAGDVTTEGLTSRFTVRHNKKRLGRITLNLPGLHNVYNSLASIAVGLELNVPFENIKAALESLSGVHRRLETKGKVGGIVVMDDYGHHPTEIRTTLQAVNDSYPERRVGVIFQPHRYSRTQSLFEDFARSFYQADYLVVLPIYPAGEKPIPGVDSVSLCKALKAYGHKHVIHAPSKESALQELDKTVREGDVLITLGAGDVYRVGESFLASRS.

112 to 118 lines the ATP pocket; that stretch reads GAHGKTT.

This sequence belongs to the MurCDEF family.

The protein localises to the cytoplasm. The catalysed reaction is UDP-N-acetyl-alpha-D-muramate + L-alanine + ATP = UDP-N-acetyl-alpha-D-muramoyl-L-alanine + ADP + phosphate + H(+). It functions in the pathway cell wall biogenesis; peptidoglycan biosynthesis. Functionally, cell wall formation. The protein is UDP-N-acetylmuramate--L-alanine ligase of Desulfatibacillum aliphaticivorans.